A 139-amino-acid polypeptide reads, in one-letter code: uncharacterized protein (139 aa).

The HIT domain occupies 3 to 110 (IFCNIVEGRD…VPTWSQDPDI (108 aa)). The short motif at 95 to 99 (HSHFH) is the Histidine triad motif element.

This is an uncharacterized protein from Saccharolobus solfataricus (strain ATCC 35092 / DSM 1617 / JCM 11322 / P2) (Sulfolobus solfataricus).